A 365-amino-acid polypeptide reads, in one-letter code: uncharacterized protein (365 aa).

At 1–133 (MVLAKQWVLK…RKLDKNKVGK (133 aa)) the chain is on the cytoplasmic side. A helical transmembrane segment spans residues 134-154 (LWWYLSVLGGTSLTAYFIFFT). Residues 155–169 (YAQLQEREEDYGKVY) are Extracellular-facing. A helical transmembrane segment spans residues 170–190 (LISGAAGAVGTVCIQLALNVF). The Cytoplasmic portion of the chain corresponds to 191-365 (KASKVIAIAG…KLITKVNNEE (175 aa)).

The protein resides in the membrane. This is an uncharacterized protein from Saccharomyces cerevisiae (strain ATCC 204508 / S288c) (Baker's yeast).